A 680-amino-acid polypeptide reads, in one-letter code: PAN2-PAN3 deadenylation complex subunit PAN3 (680 aa).

Disordered regions lie at residues 1-26, 51-87, and 99-120; these read MATTRYNSNDFRRQLGSPRPKGRADT, HDQTKKSPKPDATTRKTLNVDSAPFTPAVSSQPSKKT, and FTPRATAATPTGTPTAQETDIP. Residues 25-54 form a C3H1-type zinc finger; the sequence is DTKDTLCRNILIYGHCRYEDAGCAFNHDQT. Basic and acidic residues predominate over residues 52–64; it reads DQTKKSPKPDATT. A PABPC-interacting motif-2 (PAM-2) motif is present at residues 62–82; the sequence is ATTRKTLNVDSAPFTPAVSSQ. The span at 99-117 shows a compositional bias: low complexity; it reads FTPRATAATPTGTPTAQET. Positions 256 to 522 are pseudokinase domain; sequence QTMTGTAALQ…TVKNLVAGIN (267 aa). Residues R311, 360–367, and 422–423 each bind ATP; these read EYYPLAET and TK. Residues 523–561 adopt a coiled-coil conformation; that stretch reads EHVMTAFDAQQRQSDMLYSELYREVENGRVLRLLMKLAT. The knob domain stretch occupies residues 562–680; it reads INERTEYDKD…VHHPSHRDRF (119 aa). A compositionally biased stretch (gly residues) spans 655 to 669; sequence SGNGRGGPVASGSGH. The segment at 655-680 is disordered; it reads SGNGRGGPVASGSGHGVHHPSHRDRF. Over residues 670–680 the composition is skewed to basic residues; the sequence is GVHHPSHRDRF.

Belongs to the protein kinase superfamily. PAN3 family. Homodimer. Forms a heterotrimer with a catalytic subunit PAN2 to form the poly(A)-nuclease (PAN) deadenylation complex. Interacts (via PAM-2 motif) with poly(A)-binding protein PAB1 (via PABC domain), conferring substrate specificity of the enzyme complex.

It localises to the cytoplasm. Functionally, regulatory subunit of the poly(A)-nuclease (PAN) deadenylation complex, one of two cytoplasmic mRNA deadenylases involved in mRNA turnover. PAN specifically shortens poly(A) tails of RNA and the activity is stimulated by poly(A)-binding protein PAB1. PAN deadenylation is followed by rapid degradation of the shortened mRNA tails by the CCR4-NOT complex. Deadenylated mRNAs are then degraded by two alternative mechanisms, namely exosome-mediated 3'-5' exonucleolytic degradation, or deadenylation-dependent mRNA decaping and subsequent 5'-3' exonucleolytic degradation by XRN1. May also be involved in post-transcriptional maturation of mRNA poly(A) tails. PAN3 acts as a positive regulator for PAN activity, recruiting the catalytic subunit PAN2 to mRNA via its interaction with RNA and with PAB1. The polypeptide is PAN2-PAN3 deadenylation complex subunit PAN3 (Pyricularia oryzae (strain 70-15 / ATCC MYA-4617 / FGSC 8958) (Rice blast fungus)).